Here is a 126-residue protein sequence, read N- to C-terminus: Holo-[acyl-carrier-protein] synthase (126 aa).

Residues Asp-9 and Glu-58 each contribute to the Mg(2+) site.

This sequence belongs to the P-Pant transferase superfamily. AcpS family. Requires Mg(2+) as cofactor.

It is found in the cytoplasm. The catalysed reaction is apo-[ACP] + CoA = holo-[ACP] + adenosine 3',5'-bisphosphate + H(+). Its function is as follows. Transfers the 4'-phosphopantetheine moiety from coenzyme A to a Ser of acyl-carrier-protein. This chain is Holo-[acyl-carrier-protein] synthase, found in Shewanella denitrificans (strain OS217 / ATCC BAA-1090 / DSM 15013).